The primary structure comprises 220 residues: Ribonuclease HII (220 aa).

One can recognise an RNase H type-2 domain in the interval 27–220 (CIIVGVDEVG…SKISYMFKNS (194 aa)). Positions 33, 34, and 128 each coordinate a divalent metal cation.

It belongs to the RNase HII family. It depends on Mn(2+) as a cofactor. Mg(2+) serves as cofactor.

It is found in the cytoplasm. It carries out the reaction Endonucleolytic cleavage to 5'-phosphomonoester.. Endonuclease that specifically degrades the RNA of RNA-DNA hybrids. This Ehrlichia ruminantium (strain Gardel) protein is Ribonuclease HII.